The primary structure comprises 108 residues: Holo-[acyl-carrier-protein] synthase (108 aa).

Residues aspartate 9 and glutamate 54 each coordinate Mg(2+).

It belongs to the P-Pant transferase superfamily. AcpS family. Mg(2+) is required as a cofactor.

The protein localises to the cytoplasm. It catalyses the reaction apo-[ACP] + CoA = holo-[ACP] + adenosine 3',5'-bisphosphate + H(+). Functionally, transfers the 4'-phosphopantetheine moiety from coenzyme A to a Ser of acyl-carrier-protein. This is Holo-[acyl-carrier-protein] synthase from Mycoplasmopsis pulmonis (strain UAB CTIP) (Mycoplasma pulmonis).